The chain runs to 390 residues: Mannitol-1-phosphate 5-dehydrogenase (390 aa).

NAD(+) is bound at residue 7 to 18; sequence AVHFGGGNIGRG. The active site involves Lys-216.

This sequence belongs to the mannitol dehydrogenase family. As to quaternary structure, monomer.

It carries out the reaction D-mannitol 1-phosphate + NAD(+) = beta-D-fructose 6-phosphate + NADH + H(+). In terms of biological role, catalyzes the NAD(H)-dependent interconversion of D-fructose 6-phosphate and D-mannitol 1-phosphate in the mannitol metabolic pathway. Required for the process of sporulation on senescing leaf material. The protein is Mannitol-1-phosphate 5-dehydrogenase (mpd1) of Phaeosphaeria nodorum (strain SN15 / ATCC MYA-4574 / FGSC 10173) (Glume blotch fungus).